The following is a 475-amino-acid chain: Ankyrin repeat, SAM and basic leucine zipper domain-containing protein 1 (475 aa).

Residues 1-10 (MAAGALRGLA) show a composition bias toward low complexity. The disordered stretch occupies residues 1–23 (MAAGALRGLAVAGGGESSESEDD). Serine 17, serine 18, and serine 20 each carry phosphoserine. 6 ANK repeats span residues 45-74 (EKNE…SVDS), 78-107 (YGWT…NASF), 110-144 (DKQT…DPNV), 148-177 (RLMT…EVNT), 181-210 (NGYT…NKML), and 214-243 (DGKI…PLEG). Residues 272-334 (SYTAFGDLEI…KILSALKELE (63 aa)) form the SAM domain.

As to quaternary structure, interacts with DDX4, PIWIL1, RANBP9 and TDRD1.

It is found in the cytoplasm. Functionally, plays a central role during spermatogenesis by repressing transposable elements and preventing their mobilization, which is essential for the germline integrity. Acts via the piRNA metabolic process, which mediates the repression of transposable elements during meiosis by forming complexes composed of piRNAs and Piwi proteins and governs the methylation and subsequent repression of transposons. Its association with pi-bodies suggests a participation in the primary piRNAs metabolic process. Required prior to the pachytene stage to facilitate the production of multiple types of piRNAs, including those associated with repeats involved in the regulation of retrotransposons. May act by mediating protein-protein interactions during germ cell maturation. This Otolemur garnettii (Small-eared galago) protein is Ankyrin repeat, SAM and basic leucine zipper domain-containing protein 1 (ASZ1).